Here is a 286-residue protein sequence, read N- to C-terminus: Protease HtpX homolog (286 aa).

2 helical membrane-spanning segments follow: residues 6-26 and 28-48; these read TCFL…YVGG and QGMI…YFFS. His130 serves as a coordination point for Zn(2+). Residue Glu131 is part of the active site. Residue His134 participates in Zn(2+) binding. Helical transmembrane passes span 140 to 160 and 178 to 198; these read ILTG…ANFA and AIML…QMAI. Glu203 contacts Zn(2+).

This sequence belongs to the peptidase M48B family. Zn(2+) serves as cofactor.

It localises to the cell inner membrane. The sequence is that of Protease HtpX homolog from Campylobacter curvus (strain 525.92).